A 153-amino-acid chain; its full sequence is Large ribosomal subunit protein uL15 (153 aa).

The disordered stretch occupies residues 1 to 42; that stretch reads MKLNTIKPGIGSAKPKRRVGRGIGSGLGKTCGRGHKGQKSRA. Positions 21-31 are enriched in gly residues; that stretch reads RGIGSGLGKTC.

It belongs to the universal ribosomal protein uL15 family. As to quaternary structure, part of the 50S ribosomal subunit.

Its function is as follows. Binds to the 23S rRNA. This is Large ribosomal subunit protein uL15 from Nitrosomonas europaea (strain ATCC 19718 / CIP 103999 / KCTC 2705 / NBRC 14298).